Consider the following 447-residue polypeptide: 3-phosphoshikimate 1-carboxyvinyltransferase (447 aa).

3 residues coordinate 3-phosphoshikimate: Lys-36, Ser-37, and Arg-41. A phosphoenolpyruvate-binding site is contributed by Lys-36. Gly-109 and Arg-138 together coordinate phosphoenolpyruvate. 3-phosphoshikimate-binding residues include Ser-183, Gln-185, Asp-333, and Lys-360. Gln-185 lines the phosphoenolpyruvate pocket. Asp-333 serves as the catalytic Proton acceptor. 2 residues coordinate phosphoenolpyruvate: Arg-364 and Arg-406.

This sequence belongs to the EPSP synthase family. In terms of assembly, monomer.

Its subcellular location is the cytoplasm. The catalysed reaction is 3-phosphoshikimate + phosphoenolpyruvate = 5-O-(1-carboxyvinyl)-3-phosphoshikimate + phosphate. It functions in the pathway metabolic intermediate biosynthesis; chorismate biosynthesis; chorismate from D-erythrose 4-phosphate and phosphoenolpyruvate: step 6/7. Catalyzes the transfer of the enolpyruvyl moiety of phosphoenolpyruvate (PEP) to the 5-hydroxyl of shikimate-3-phosphate (S3P) to produce enolpyruvyl shikimate-3-phosphate and inorganic phosphate. The polypeptide is 3-phosphoshikimate 1-carboxyvinyltransferase (Synechocystis sp. (strain ATCC 27184 / PCC 6803 / Kazusa)).